Consider the following 517-residue polypeptide: Probable cytosol aminopeptidase (517 aa).

The Mn(2+) site is built by K279 and D284. The active site involves K291. Mn(2+) is bound by residues D302, D361, and E363. The active site involves R365.

It belongs to the peptidase M17 family. It depends on Mn(2+) as a cofactor.

Its subcellular location is the cytoplasm. It catalyses the reaction Release of an N-terminal amino acid, Xaa-|-Yaa-, in which Xaa is preferably Leu, but may be other amino acids including Pro although not Arg or Lys, and Yaa may be Pro. Amino acid amides and methyl esters are also readily hydrolyzed, but rates on arylamides are exceedingly low.. The catalysed reaction is Release of an N-terminal amino acid, preferentially leucine, but not glutamic or aspartic acids.. In terms of biological role, presumably involved in the processing and regular turnover of intracellular proteins. Catalyzes the removal of unsubstituted N-terminal amino acids from various peptides. The protein is Probable cytosol aminopeptidase of Streptomyces coelicolor (strain ATCC BAA-471 / A3(2) / M145).